Here is a 121-residue protein sequence, read N- to C-terminus: Large ribosomal subunit protein uL14 (121 aa).

Belongs to the universal ribosomal protein uL14 family. Part of the 50S ribosomal subunit. Forms a cluster with proteins L3 and L19. In the 70S ribosome, L14 and L19 interact and together make contacts with the 16S rRNA in bridges B5 and B8.

Functionally, binds to 23S rRNA. Forms part of two intersubunit bridges in the 70S ribosome. The sequence is that of Large ribosomal subunit protein uL14 from Pseudoalteromonas atlantica (strain T6c / ATCC BAA-1087).